A 271-amino-acid chain; its full sequence is Aminoglycoside 3'-phosphotransferase (271 aa).

Aspartate 198 (proton acceptor) is an active-site residue.

Belongs to the aminoglycoside phosphotransferase family.

It catalyses the reaction kanamycin A + ATP = kanamycin 3'-phosphate + ADP + H(+). Its function is as follows. Resistance to kanamycin and structurally-related aminoglycosides, including amikacin. This chain is Aminoglycoside 3'-phosphotransferase (aphA1), found in Escherichia coli.